The chain runs to 276 residues: NAD-capped RNA hydrolase NudC (276 aa).

Arg82 is a binding site for substrate. The Zn(2+) site is built by Cys112 and Cys115. Glu125 is a substrate binding site. Zn(2+)-binding residues include Cys130 and Cys133. Tyr138 provides a ligand contact to substrate. Positions 139–262 (PRISPSMIVL…SIARYLIDLY (124 aa)) constitute a Nudix hydrolase domain. Residues Ala172, Glu188, and Glu192 each contribute to the a divalent metal cation site. The short motif at 173–194 (GFAEPGESAEDCLVREVREEVA) is the Nudix box element. 206–213 (QCWPFPHS) lines the substrate pocket. Glu233 lines the a divalent metal cation pocket. Residue Ala255 coordinates substrate.

This sequence belongs to the Nudix hydrolase family. NudC subfamily. Homodimer. Mg(2+) serves as cofactor. Requires Mn(2+) as cofactor. It depends on Zn(2+) as a cofactor.

It carries out the reaction a 5'-end NAD(+)-phospho-ribonucleoside in mRNA + H2O = a 5'-end phospho-adenosine-phospho-ribonucleoside in mRNA + beta-nicotinamide D-ribonucleotide + 2 H(+). It catalyses the reaction NAD(+) + H2O = beta-nicotinamide D-ribonucleotide + AMP + 2 H(+). The enzyme catalyses NADH + H2O = reduced beta-nicotinamide D-ribonucleotide + AMP + 2 H(+). Its function is as follows. mRNA decapping enzyme that specifically removes the nicotinamide adenine dinucleotide (NAD) cap from a subset of mRNAs by hydrolyzing the diphosphate linkage to produce nicotinamide mononucleotide (NMN) and 5' monophosphate mRNA. The NAD-cap is present at the 5'-end of some mRNAs and stabilizes RNA against 5'-processing. Has preference for mRNAs with a 5'-end purine. Catalyzes the hydrolysis of a broad range of dinucleotide pyrophosphates. The protein is NAD-capped RNA hydrolase NudC of Pseudomonas putida (strain W619).